The primary structure comprises 331 residues: 6-phosphogluconolactonase (331 aa).

Lys287 carries the N6-acetyllysine modification.

It belongs to the cycloisomerase 2 family.

The catalysed reaction is 6-phospho-D-glucono-1,5-lactone + H2O = 6-phospho-D-gluconate + H(+). The protein operates within carbohydrate degradation; pentose phosphate pathway; D-ribulose 5-phosphate from D-glucose 6-phosphate (oxidative stage): step 2/3. In terms of biological role, catalyzes the hydrolysis of 6-phosphogluconolactone to 6-phosphogluconate. This is 6-phosphogluconolactonase from Escherichia coli O157:H7.